The following is a 313-amino-acid chain: tRNA-cytidine(32) 2-sulfurtransferase (313 aa).

Residues 60–65 (SGGKDS) carry the PP-loop motif motif. [4Fe-4S] cluster contacts are provided by C135, C138, and C226.

The protein belongs to the TtcA family. Homodimer. Mg(2+) serves as cofactor. Requires [4Fe-4S] cluster as cofactor.

It localises to the cytoplasm. The enzyme catalyses cytidine(32) in tRNA + S-sulfanyl-L-cysteinyl-[cysteine desulfurase] + AH2 + ATP = 2-thiocytidine(32) in tRNA + L-cysteinyl-[cysteine desulfurase] + A + AMP + diphosphate + H(+). Its pathway is tRNA modification. Its function is as follows. Catalyzes the ATP-dependent 2-thiolation of cytidine in position 32 of tRNA, to form 2-thiocytidine (s(2)C32). The sulfur atoms are provided by the cysteine/cysteine desulfurase (IscS) system. The sequence is that of tRNA-cytidine(32) 2-sulfurtransferase from Delftia acidovorans (strain DSM 14801 / SPH-1).